A 349-amino-acid chain; its full sequence is Anthranilate phosphoribosyltransferase (349 aa).

Residues Gly-82, 85-86, 92-95, 110-118, and Ser-122 contribute to the 5-phospho-alpha-D-ribose 1-diphosphate site; these read GD, NVST, and KHGNRAVSG. Gly-82 contributes to the anthranilate binding site. Ser-94 serves as a coordination point for Mg(2+). Position 113 (Asn-113) interacts with anthranilate. Residue Arg-168 participates in anthranilate binding. Residues Asp-227 and Glu-228 each contribute to the Mg(2+) site.

Belongs to the anthranilate phosphoribosyltransferase family. Homodimer. Mg(2+) is required as a cofactor.

It catalyses the reaction N-(5-phospho-beta-D-ribosyl)anthranilate + diphosphate = 5-phospho-alpha-D-ribose 1-diphosphate + anthranilate. It participates in amino-acid biosynthesis; L-tryptophan biosynthesis; L-tryptophan from chorismate: step 2/5. Catalyzes the transfer of the phosphoribosyl group of 5-phosphorylribose-1-pyrophosphate (PRPP) to anthranilate to yield N-(5'-phosphoribosyl)-anthranilate (PRA). The sequence is that of Anthranilate phosphoribosyltransferase from Pseudomonas syringae pv. tomato (strain ATCC BAA-871 / DC3000).